The primary structure comprises 421 residues: Phosphatidylinositol 5-phosphate 4-kinase type-2 gamma (421 aa).

At A2 the chain carries N-acetylalanine. Phosphoserine is present on S26. Residues 43-420 enclose the PIPK domain; it reads AADPLVGVFL…RFLDFITNIF (378 aa). Residues 69 to 75 are required for interaction with PIP5K1A; it reads VMLLPDD. Residue S349 is modified to Phosphoserine.

As to quaternary structure, interacts with PIP5K1A; the interaction inhibits PIP5K1A kinase activity. Phosphorylated, phosphorylation is induced by EGF.

It is found in the endoplasmic reticulum. Its subcellular location is the cytoplasm. The catalysed reaction is a 1,2-diacyl-sn-glycero-3-phospho-(1D-myo-inositol-5-phosphate) + ATP = a 1,2-diacyl-sn-glycero-3-phospho-(1D-myo-inositol-4,5-bisphosphate) + ADP + H(+). It carries out the reaction 1,2-dihexadecanoyl-sn-glycero-3-phospho-(1D-myo-inositol-5-phosphate) + ATP = 1,2-dihexadecanoyl-sn-glycero-3-phospho-(1D-myo-inositol-4,5-bisphosphate) + ADP + H(+). The enzyme catalyses 1,2-dihexadecanoyl-sn-glycero-3-phospho-(1D-myo-inositol-5-phosphate) + GTP = 1,2-dihexadecanoyl-sn-glycero-3-phospho-(1D-myo-inositol-4,5-bisphosphate) + GDP + H(+). Its function is as follows. Phosphatidylinositol 5-phosphate 4-kinase with low enzymatic activity. May be a GTP sensor, has higher GTP-dependent kinase activity than ATP-dependent kinase activity. PIP4Ks negatively regulate insulin signaling through a catalytic-independent mechanism. They interact with PIP5Ks and suppress PIP5K-mediated PtdIns(4,5)P2 synthesis and insulin-dependent conversion to PtdIns(3,4,5)P3. This is Phosphatidylinositol 5-phosphate 4-kinase type-2 gamma from Homo sapiens (Human).